A 391-amino-acid polypeptide reads, in one-letter code: Na(+)/H(+) antiporter NhaA (391 aa).

11 consecutive transmembrane segments (helical) span residues 14 to 34 (AGGILLLVAVVFAMLMANSPL), 59 to 79 (LLLWINDGLMALFFLLIGLEV), 95 to 115 (SLPSFAAIGGMLVPAGIYLLF), 124 to 144 (AGWAIPAATDIAFALGIMALL), 154 to 174 (VFLLALAIIDDLGVIVIIALF), 177 to 197 (SDLSTISLAIASVAILGLVGL), 213 to 233 (LILWVAVLKSGVHATLAGVII), 261 to 281 (FLILPVFAFANAGVALGNMSL), 290 to 310 (IGIALGLILGKPIGVMLFSFI), 328 to 348 (IAPVAAMCGIGFTMSMFIASL), and 363 to 383 (LGTLIGSFIAALVGYFWLSKV).

It belongs to the NhaA Na(+)/H(+) (TC 2.A.33) antiporter family.

The protein localises to the cell inner membrane. It catalyses the reaction Na(+)(in) + 2 H(+)(out) = Na(+)(out) + 2 H(+)(in). Functionally, na(+)/H(+) antiporter that extrudes sodium in exchange for external protons. The chain is Na(+)/H(+) antiporter NhaA from Shewanella putrefaciens (strain CN-32 / ATCC BAA-453).